A 163-amino-acid polypeptide reads, in one-letter code: Large ribosomal subunit protein uL10 (163 aa).

The protein belongs to the universal ribosomal protein uL10 family. As to quaternary structure, part of the ribosomal stalk of the 50S ribosomal subunit. The N-terminus interacts with L11 and the large rRNA to form the base of the stalk. The C-terminus forms an elongated spine to which L12 dimers bind in a sequential fashion forming a multimeric L10(L12)X complex.

Its function is as follows. Forms part of the ribosomal stalk, playing a central role in the interaction of the ribosome with GTP-bound translation factors. The chain is Large ribosomal subunit protein uL10 from Actinobacillus succinogenes (strain ATCC 55618 / DSM 22257 / CCUG 43843 / 130Z).